Here is a 468-residue protein sequence, read N- to C-terminus: tRNA (guanine(37)-N(1))-methyltransferase 1 (468 aa).

Residues His207, 245 to 246 (DL), and 273 to 274 (DA) each bind S-adenosyl-L-methionine. The segment at 301–348 (KEAAVSRGGETNSSGEEIRESNASINEPLGANKKPSGTTKTENGVGKD) is disordered. Polar residues predominate over residues 309–325 (GETNSSGEEIRESNASI). S-adenosyl-L-methionine is bound at residue Asn380.

Belongs to the class I-like SAM-binding methyltransferase superfamily. TRM5/TYW2 family. Monomer.

It localises to the mitochondrion matrix. It is found in the nucleus. The protein resides in the cytoplasm. It catalyses the reaction guanosine(37) in tRNA + S-adenosyl-L-methionine = N(1)-methylguanosine(37) in tRNA + S-adenosyl-L-homocysteine + H(+). Specifically methylates the N1 position of guanosine-37 in various cytoplasmic and mitochondrial tRNAs. Methylation is not dependent on the nature of the nucleoside 5' of the target nucleoside. This is the first step in the biosynthesis of wybutosine (yW), a modified base adjacent to the anticodon of tRNAs and required for accurate decoding. The polypeptide is tRNA (guanine(37)-N(1))-methyltransferase 1 (Arabidopsis thaliana (Mouse-ear cress)).